Consider the following 126-residue polypeptide: Glycine cleavage system H protein (126 aa).

The Lipoyl-binding domain maps to 22-104; the sequence is KLRIGITDFA…YEKAWMIVIE (83 aa). K63 is subject to N6-lipoyllysine.

The protein belongs to the GcvH family. In terms of assembly, the glycine cleavage system is composed of four proteins: P, T, L and H. (R)-lipoate is required as a cofactor.

The glycine cleavage system catalyzes the degradation of glycine. The H protein shuttles the methylamine group of glycine from the P protein to the T protein. Its function is as follows. Is also involved in protein lipoylation via its role as an octanoyl/lipoyl carrier protein intermediate. This Oceanobacillus iheyensis (strain DSM 14371 / CIP 107618 / JCM 11309 / KCTC 3954 / HTE831) protein is Glycine cleavage system H protein.